A 491-amino-acid chain; its full sequence is Cobyric acid synthase (491 aa).

A GATase cobBQ-type domain is found at 253 to 429 (ARRVAVIRLP…WHGALEGDEL (177 aa)). Cys334 serves as the catalytic Nucleophile. The active site involves His421.

It belongs to the CobB/CobQ family. CobQ subfamily.

Its pathway is cofactor biosynthesis; adenosylcobalamin biosynthesis. Functionally, catalyzes amidations at positions B, D, E, and G on adenosylcobyrinic A,C-diamide. NH(2) groups are provided by glutamine, and one molecule of ATP is hydrogenolyzed for each amidation. In Mycolicibacterium gilvum (strain PYR-GCK) (Mycobacterium gilvum (strain PYR-GCK)), this protein is Cobyric acid synthase.